A 716-amino-acid chain; its full sequence is Polyribonucleotide nucleotidyltransferase (716 aa).

The Mg(2+) site is built by Asp-490 and Asp-496. Residues 556–615 (PKIETLTIPTDKIREVIGSGGKVIREIVETSGAKVDINDDGVIKIASNDQAAIKKAYDMI) form the KH domain. The region spanning 625 to 693 (GQIYTGKVVK…ERGKVRLGMK (69 aa)) is the S1 motif domain. Residues 695 to 716 (VDQETGQEIQPEKKEREEAGEA) form a disordered region. A compositionally biased stretch (basic and acidic residues) spans 704 to 716 (QPEKKEREEAGEA).

The protein belongs to the polyribonucleotide nucleotidyltransferase family. The cofactor is Mg(2+).

Its subcellular location is the cytoplasm. The enzyme catalyses RNA(n+1) + phosphate = RNA(n) + a ribonucleoside 5'-diphosphate. Functionally, involved in mRNA degradation. Catalyzes the phosphorolysis of single-stranded polyribonucleotides processively in the 3'- to 5'-direction. This Cereibacter sphaeroides (strain KD131 / KCTC 12085) (Rhodobacter sphaeroides) protein is Polyribonucleotide nucleotidyltransferase.